The following is a 98-amino-acid chain: Cystatin-B (98 aa).

Residue M1 is modified to N-acetylmethionine. The Secondary area of contact signature appears at 46-50 (QVVAG).

It belongs to the cystatin family. Able to form dimers stabilized by noncovalent forces.

It localises to the cytoplasm. Its subcellular location is the nucleus. This is an intracellular thiol proteinase inhibitor. Tightly binding reversible inhibitor of cathepsins L, H and B. The polypeptide is Cystatin-B (CSTB) (Pongo pygmaeus (Bornean orangutan)).